The chain runs to 128 residues: Large ribosomal subunit protein bL12 (128 aa).

Belongs to the bacterial ribosomal protein bL12 family. As to quaternary structure, homodimer. Part of the ribosomal stalk of the 50S ribosomal subunit. Forms a multimeric L10(L12)X complex, where L10 forms an elongated spine to which 2 to 4 L12 dimers bind in a sequential fashion. Binds GTP-bound translation factors.

Its function is as follows. Forms part of the ribosomal stalk which helps the ribosome interact with GTP-bound translation factors. Is thus essential for accurate translation. This is Large ribosomal subunit protein bL12 from Acidithiobacillus ferrooxidans (strain ATCC 23270 / DSM 14882 / CIP 104768 / NCIMB 8455) (Ferrobacillus ferrooxidans (strain ATCC 23270)).